The sequence spans 229 residues: MLSGLIQRFEEEKMKHNQERVEELSLVRVDDAISQPPRYAPSAPMPSSMPTVALEILDKAMSNTTGATQTQKAEKAAFASYAEAFRDDVRLRQIKRHVNEQILPKLKSDLGGLKKKRAIIHMTLLIAAVVALLTSVCTLSSDMSVAFKLNGTSAEIPQWFKSLNPMLGVVNVGATFLMMVCAKSERSLNQQIDMIKKEVMKKQSYNDAVRMSFTEFSSVPLDGFELPLT.

Transmembrane regions (helical) follow at residues 119–139 (IIHM…VCTL) and 162–182 (SLNP…MVCA).

The protein belongs to the orbivirus NS3 family. Forms homooligomers via coiled-coil motif. Interacts with host OPTN; this interaction inhibits innate immune response.

It is found in the host cell membrane. Its subcellular location is the host Golgi apparatus. Plays a role in the inhibition of host innate immune response. Interacts with host OPTN and thus inhibits the recruitment of TBK1 to the host Golgi apparatus. In turn, downstream partner IRF3 cannot be activated and IFN-beta production is impaired. Its function is as follows. Facilitates viral particle release either by increasing plasma membrane permeability through a viroporin-like activity or by viral budding. The chain is Non-structural protein P8 (Segment-10) from Antilocapra americana (Pronghorn).